A 67-amino-acid polypeptide reads, in one-letter code: Large ribosomal subunit protein bL35 (67 aa).

A disordered region spans residues 22 to 52 (VLAGPGKKRHNLSARSQKAKRQNRGSQVLTH). Basic residues predominate over residues 27–44 (GKKRHNLSARSQKAKRQN).

This sequence belongs to the bacterial ribosomal protein bL35 family.

In Granulibacter bethesdensis (strain ATCC BAA-1260 / CGDNIH1), this protein is Large ribosomal subunit protein bL35.